The primary structure comprises 217 residues: Small ribosomal subunit protein uS3 (217 aa).

The KH type-2 domain occupies 38–106 (IRKFIDNELK…KVHINVIEIK (69 aa)).

It belongs to the universal ribosomal protein uS3 family. As to quaternary structure, part of the 30S ribosomal subunit. Forms a tight complex with proteins S10 and S14.

Binds the lower part of the 30S subunit head. Binds mRNA in the 70S ribosome, positioning it for translation. The sequence is that of Small ribosomal subunit protein uS3 (rpsC) from Staphylococcus aureus (strain COL).